A 105-amino-acid polypeptide reads, in one-letter code: Transcription factor S (105 aa).

Residues Cys5, Cys8, Cys21, Cys24, Cys66, Cys69, Cys94, and Cys97 each contribute to the Zn(2+) site. A C4-type zinc finger spans residues 5–24 (CPKCNNIMLPKNGRLKCTVC). Residues 62–102 (TRIECPSCGNMEASWWLQQTRCADEPETRFYKCKKCGHTWR) form a TFIIS-type zinc finger.

This sequence belongs to the archaeal RpoM/eukaryotic RPA12/RPB9/RPC11 RNA polymerase family.

Functionally, induces RNA cleavage activity in the RNA polymerase. In its presence, the cleavage activity of the RNA polymerase truncates the RNA back to position +15 in a stepwise manner by releasing mainly dinucleotides from the 3'-end of the nascent RNA. The truncated RNAs are able to continue elongation. Involved in transcriptional proofreading and fidelity. Misincorporation of nucleotides during elongation of transcription leads to arrested elongation complexes which are rescued by TFS-promoted removal of a dinucleotide from the 3'-end. TFS is able to induce a cleavage resynthesis cycle in stalled elongation complexes (resulting from the next missing nucleotide or a reduced incorporation rate of a wrong nucleotide) preventing misincorporation and enabling proofreading in a post-incorporation manner. Pausing of elongation complexes is the main determinant of TFS-induced RNA cleavage. The sequence is that of Transcription factor S from Methanothermococcus thermolithotrophicus (Methanococcus thermolithotrophicus).